The sequence spans 726 residues: Long-chain-fatty-acid--CoA ligase ACSBG1 (726 aa).

A disordered region spans residues 1-39; the sequence is MPDSRAAPQESLLDASLGTTQENVGTSSLTDGQTLSKEP. The span at 17 to 36 shows a compositional bias: polar residues; the sequence is LGTTQENVGTSSLTDGQTLS. A Phosphoserine modification is found at Ser-36. Tyr-641 is subject to Phosphotyrosine. Positions 707–726 are disordered; that stretch reads SKQGSSLPGFSLRWQTGASS.

Belongs to the ATP-dependent AMP-binding enzyme family. Bubblegum subfamily.

Its subcellular location is the cytoplasm. The protein localises to the cytoplasmic vesicle. It is found in the microsome. It localises to the endoplasmic reticulum. The protein resides in the cell membrane. The enzyme catalyses a long-chain fatty acid + ATP + CoA = a long-chain fatty acyl-CoA + AMP + diphosphate. It catalyses the reaction (E)-hexadec-2-enoate + ATP + CoA = (2E)-hexadecenoyl-CoA + AMP + diphosphate. It carries out the reaction hexadecanoate + ATP + CoA = hexadecanoyl-CoA + AMP + diphosphate. In terms of biological role, catalyzes the conversion of fatty acids such as long-chain and very long-chain fatty acids to their active form acyl-CoAs for both synthesis of cellular lipids, and degradation via beta-oxidation. Can activate diverse saturated, monosaturated and polyunsaturated fatty acids. The sequence is that of Long-chain-fatty-acid--CoA ligase ACSBG1 from Bos taurus (Bovine).